Consider the following 183-residue polypeptide: 2-hydroxy-1,4-benzoquinone reductase (183 aa).

FMN-binding positions include 11–18, 77–80, and Ser113; these read SLRRDSFN and EYNR.

Belongs to the SsuE family. As to quaternary structure, homotetramer. Requires FMN as cofactor.

The enzyme catalyses 2-hydroxy-1,4-benzoquinone + NADH + 2 H(+) = benzene-1,2,4-triol + NAD(+). Involved in the metabolism of 4-aminophenol. Catalyzes the reduction of the auto-oxidation product 2-hydroxy-1,4-benzoquinone back to hydroxyquinol. Has a broad substrate specificity toward benzoquinones, converting them to the corresponding 1,4-benzenediols. The chain is 2-hydroxy-1,4-benzoquinone reductase from Burkholderia sp.